A 295-amino-acid polypeptide reads, in one-letter code: GTPase Era (295 aa).

In terms of domain architecture, Era-type G spans 7–176 (KTVSVCIIGR…ITSKAKIAPW (170 aa)). A G1 region spans residues 15–22 (GRPNSGKS). GTP is bound at residue 15–22 (GRPNSGKS). Residues 41–45 (QTTRS) are G2. Residues 62-65 (DTPG) form a G3 region. GTP contacts are provided by residues 62–66 (DTPGI) and 124–127 (NKID). A G4 region spans residues 124–127 (NKID). Residues 152–154 (ISA) form a G5 region. Residues 204–281 (LQQELPYKLT…HLFLFVKVRE (78 aa)) enclose the KH type-2 domain.

The protein belongs to the TRAFAC class TrmE-Era-EngA-EngB-Septin-like GTPase superfamily. Era GTPase family. In terms of assembly, monomer.

Its subcellular location is the cytoplasm. The protein localises to the cell inner membrane. An essential GTPase that binds both GDP and GTP, with rapid nucleotide exchange. Plays a role in 16S rRNA processing and 30S ribosomal subunit biogenesis and possibly also in cell cycle regulation and energy metabolism. The sequence is that of GTPase Era from Rickettsia bellii (strain OSU 85-389).